Reading from the N-terminus, the 129-residue chain is Small ribosomal subunit protein uS9 (129 aa).

This sequence belongs to the universal ribosomal protein uS9 family.

The protein is Small ribosomal subunit protein uS9 of Chlorobium phaeobacteroides (strain DSM 266 / SMG 266 / 2430).